A 451-amino-acid chain; its full sequence is MTTRYRVEYALKSHRRDQLIEWIKGLLAVPFVLHSQPTAVQEEDATKLAAVAHDTHQRYAEIFSDVERLLNDHIDHELSGAAGKSKLKLLVPTVGTFFTRLYLREAFDYQDRQRFISRRRFVAPSFNDVRLILNSAQLLGLVHTKGLELVTFDGDVTLYDDGANLNADSPVIPRIIRLLQQGIKVGIVTAAGYTDEAKYYERLQGLLDVMRDASDLTDEQRSALIVMGGESNYLFRYDASSPHRLTYVPRENWVIGEMATWEEEDITQLLNIAESSLRACVANLNLPVSVLRKDRAVGVFPKNRGRLSREQLEETVLVVQNTVERSQVGSRLPFCAFNGCSPFFVSHYLRHHPPRRKYKPPIQPCMLISITQPGGNDVFVDIGDKSWGVRACQQYFGGIDPSRTLHVGDQFLSAGANDFKARLASTTAWIASPAETVQLLDELDTIQKVLA.

The active-site Nucleophile is Asp153. Residues Asp153, Asp155, Asp161, Thr189, Asp377, and Lys385 each contribute to the IMP site. Mg(2+) contacts are provided by Asp153 and Asp155. Asp155 serves as the catalytic Proton donor. Position 409 (Asp409) interacts with Mg(2+).

This sequence belongs to the ISN1 family. As to quaternary structure, homotetramer. The cofactor is Mg(2+).

The catalysed reaction is IMP + H2O = inosine + phosphate. With respect to regulation, allosterically activated by ATP. ATP binding is a prerequisite to magnesium and substrate binding. ATP binds to 2 of the subunits in the homotetramer inducing a closure of these 2 subunits and the release of the C-terminal loop, thereby activating the enzyme. Its function is as follows. IMP-specific 5'-nucleotidase involved in IMP (inositol monophosphate) degradation. The protein is IMP-specific 5'-nucleotidase 1 (isn1) of Emericella nidulans (strain FGSC A4 / ATCC 38163 / CBS 112.46 / NRRL 194 / M139) (Aspergillus nidulans).